We begin with the raw amino-acid sequence, 160 residues long: Class B acid phosphatase (160 aa).

The first 23 residues, 1-23, serve as a signal peptide directing secretion; the sequence is MRKVTLTLSAIALALSLNGAAMA. The active-site Nucleophile is the aspartate 69. Mg(2+) is bound by residues aspartate 69 and aspartate 71. Aspartate 71 (proton donor) is an active-site residue. Residue 137 to 138 participates in substrate binding; sequence TG.

It belongs to the class B bacterial acid phosphatase family. Homotetramer. Mg(2+) is required as a cofactor.

The protein localises to the periplasm. The enzyme catalyses a phosphate monoester + H2O = an alcohol + phosphate. Dephosphorylates several organic phosphate monoesters. Also has a phosphotransferase activity catalyzing the transfer of low-energy phosphate groups from organic phosphate monoesters to free hydroxyl groups of various organic compounds. The chain is Class B acid phosphatase (aphA) from Proteus mirabilis.